The primary structure comprises 466 residues: Glutamate--tRNA ligase (466 aa).

The short motif at 9–19 (PSPTGDLHVGS) is the 'HIGH' region element. The short motif at 237-241 (KLSKR) is the 'KMSKS' region element. An ATP-binding site is contributed by Lys-240.

It belongs to the class-I aminoacyl-tRNA synthetase family. Glutamate--tRNA ligase type 1 subfamily. In terms of assembly, monomer.

It localises to the cytoplasm. It catalyses the reaction tRNA(Glu) + L-glutamate + ATP = L-glutamyl-tRNA(Glu) + AMP + diphosphate. Catalyzes the attachment of glutamate to tRNA(Glu) in a two-step reaction: glutamate is first activated by ATP to form Glu-AMP and then transferred to the acceptor end of tRNA(Glu). This is Glutamate--tRNA ligase from Baumannia cicadellinicola subsp. Homalodisca coagulata.